A 340-amino-acid chain; its full sequence is Protein B17 (340 aa).

This sequence belongs to the orthopoxvirus B17 protein family.

In Vaccinia virus (strain Copenhagen) (VACV), this protein is Protein B17.